The sequence spans 462 residues: tRNA-2-methylthio-N(6)-dimethylallyladenosine synthase (462 aa).

Residues 18–138 enclose the MTTase N-terminal domain; sequence RKVFVKTYGC…LPNALARVRS (121 aa). Residues cysteine 27, cysteine 63, cysteine 101, cysteine 179, cysteine 183, and cysteine 186 each contribute to the [4Fe-4S] cluster site. The region spanning 165–397 is the Radical SAM core domain; the sequence is RKRGVSAFLT…QALLSEQQYA (233 aa). The TRAM domain occupies 400-462; the sequence is DSMIGREMDV…TNSLIAQKLA (63 aa).

Belongs to the methylthiotransferase family. MiaB subfamily. In terms of assembly, monomer. [4Fe-4S] cluster is required as a cofactor.

The protein localises to the cytoplasm. It carries out the reaction N(6)-dimethylallyladenosine(37) in tRNA + (sulfur carrier)-SH + AH2 + 2 S-adenosyl-L-methionine = 2-methylsulfanyl-N(6)-dimethylallyladenosine(37) in tRNA + (sulfur carrier)-H + 5'-deoxyadenosine + L-methionine + A + S-adenosyl-L-homocysteine + 2 H(+). Its function is as follows. Catalyzes the methylthiolation of N6-(dimethylallyl)adenosine (i(6)A), leading to the formation of 2-methylthio-N6-(dimethylallyl)adenosine (ms(2)i(6)A) at position 37 in tRNAs that read codons beginning with uridine. This Brucella anthropi (strain ATCC 49188 / DSM 6882 / CCUG 24695 / JCM 21032 / LMG 3331 / NBRC 15819 / NCTC 12168 / Alc 37) (Ochrobactrum anthropi) protein is tRNA-2-methylthio-N(6)-dimethylallyladenosine synthase.